The primary structure comprises 465 residues: Cysteine--tRNA ligase (465 aa).

Position 27 (cysteine 27) interacts with Zn(2+). The 'HIGH' region signature appears at 29–39 (PTVYDDAHLGH). Residues 153 to 173 (DISHKVSDDDTQSRVEHNSEK) are disordered. Residues cysteine 208, histidine 237, and glutamate 241 each contribute to the Zn(2+) site. Positions 269–273 (KMSKS) match the 'KMSKS' region motif. Residue lysine 272 coordinates ATP.

This sequence belongs to the class-I aminoacyl-tRNA synthetase family. As to quaternary structure, monomer. The cofactor is Zn(2+).

The protein resides in the cytoplasm. It carries out the reaction tRNA(Cys) + L-cysteine + ATP = L-cysteinyl-tRNA(Cys) + AMP + diphosphate. This is Cysteine--tRNA ligase from Sulfurovum sp. (strain NBC37-1).